The primary structure comprises 401 residues: MSDSVNLDEPSTNSTHFLQCLVTEPRKELQGSRDTHVSYLIITKTNLSIFTRAECKVRRRFSDFVKLQEILSRMNEDCVVPPLPAKHKLEYIKGGRFSDNFINRRAKLLNRYITRCALHPVLHQSPHFIAFLENPNWNNYVRFFIQPKLNNTSKLDEISDSLLNAFSKLKEEPTEFDIQRDHVQQFMFGISNLEGSIQKLLRLEKALESDYEDVSIQFDRLASLDQALDVPIESIQNALQQTGTEYANLTEKLTLLLDTIKDVESYAHSLKELLKRRDQKQQDVEALQEYSAKLSLERDKISSGGSNGFSLSKTLDDLRGIDHNDTRLKRLEHVQSELQAVEQAIQEASAVHDAFNQRVREESKLFDSVRQSEMLSAISDYANVHVEFFTNIRDLWIRVKQ.

Positions 17 to 139 (FLQCLVTEPR…AFLENPNWNN (123 aa)) constitute a PX domain. The a 1,2-diacyl-sn-glycero-3-phospho-(1D-myo-inositol-3-phosphate) site is built by Arg60, Ser62, Lys86, and Arg105. The residue at position 62 (Ser62) is a Phosphoserine. Positions 190–292 (ISNLEGSIQK…DVEALQEYSA (103 aa)) form a coiled coil.

This sequence belongs to the sorting nexin family.

The protein resides in the cytoplasm. It is found in the cytosol. The protein localises to the preautophagosomal structure membrane. Its subcellular location is the endosome membrane. Its function is as follows. Sorting nexin, involved in the separation or division of vacuoles throughout the entire life cycle of the cells. Involved in retrieval of late-Golgi SNAREs from post-Golgi endosomes to the trans-Golgi network, for cytoplasm to vacuole transport (Cvt), and autophagy of large cargos including mitophagy, pexophagy and glycophagy. This chain is Sorting nexin-4 (snx4), found in Schizosaccharomyces pombe (strain 972 / ATCC 24843) (Fission yeast).